Consider the following 176-residue polypeptide: RNA pyrophosphohydrolase (176 aa).

Residues 6–149 (GYRPNVGIVI…KRDVYRRVMK (144 aa)) enclose the Nudix hydrolase domain. A Nudix box motif is present at residues 38–59 (GGINPGESAEQAMYRELFEEVG).

The protein belongs to the Nudix hydrolase family. RppH subfamily. Requires a divalent metal cation as cofactor.

Accelerates the degradation of transcripts by removing pyrophosphate from the 5'-end of triphosphorylated RNA, leading to a more labile monophosphorylated state that can stimulate subsequent ribonuclease cleavage. The sequence is that of RNA pyrophosphohydrolase from Shigella boydii serotype 18 (strain CDC 3083-94 / BS512).